We begin with the raw amino-acid sequence, 609 residues long: Neutral protease (609 aa).

An N-terminal signal peptide occupies residues 1 to 24 (MNKTQRHINWLLAVSAATALPVTA). A propeptide spanning residues 25–196 (AEMINVNDGS…VLQTWDGLNH (172 aa)) is cleaved from the precursor. Histidine 343 contributes to the Zn(2+) binding site. Glutamate 344 is an active-site residue. 2 residues coordinate Zn(2+): histidine 347 and glutamate 367. The Proton donor role is filled by histidine 426.

It belongs to the peptidase M4 family. It depends on Zn(2+) as a cofactor.

It is found in the secreted. It catalyses the reaction Preferential cleavage of bonds with bulky hydrophobic groups in P2 and P1'. Phe at P1' is the most favored residue, which distinguished this enzyme from thermolysin.. Functionally, extracellular zinc metalloprotease. The protein is Neutral protease (nprV) of Vibrio proteolyticus (Aeromonas proteolytica).